A 108-amino-acid chain; its full sequence is Large ribosomal subunit protein bL31B (108 aa).

The interval 85-108 (PKPETSVEEVLPKGKKKAPAKKKK) is disordered. Residues 97 to 108 (KGKKKAPAKKKK) are compositionally biased toward basic residues.

The protein belongs to the bacterial ribosomal protein bL31 family. Type B subfamily. Part of the 50S ribosomal subunit.

The chain is Large ribosomal subunit protein bL31B from Chlamydia muridarum (strain MoPn / Nigg).